The sequence spans 130 residues: Small ribosomal subunit protein uS9 (130 aa).

This sequence belongs to the universal ribosomal protein uS9 family.

This is Small ribosomal subunit protein uS9 from Halorhodospira halophila (strain DSM 244 / SL1) (Ectothiorhodospira halophila (strain DSM 244 / SL1)).